Consider the following 342-residue polypeptide: N-acetyl-gamma-glutamyl-phosphate reductase (342 aa).

Residue Cys149 is part of the active site.

The protein belongs to the NAGSA dehydrogenase family. Type 1 subfamily.

The protein resides in the cytoplasm. The catalysed reaction is N-acetyl-L-glutamate 5-semialdehyde + phosphate + NADP(+) = N-acetyl-L-glutamyl 5-phosphate + NADPH + H(+). The protein operates within amino-acid biosynthesis; L-arginine biosynthesis; N(2)-acetyl-L-ornithine from L-glutamate: step 3/4. Functionally, catalyzes the NADPH-dependent reduction of N-acetyl-5-glutamyl phosphate to yield N-acetyl-L-glutamate 5-semialdehyde. The sequence is that of N-acetyl-gamma-glutamyl-phosphate reductase from Nitrosomonas eutropha (strain DSM 101675 / C91 / Nm57).